We begin with the raw amino-acid sequence, 287 residues long: Cbb3-type cytochrome c oxidase subunit FixP (287 aa).

Residues methionine 1–tryptophan 33 lie on the Cytoplasmic side of the membrane. A helical transmembrane segment spans residues isoleucine 34–isoleucine 54. Over proline 55–threonine 287 the chain is Periplasmic. Cytochrome c domains lie at phenylalanine 108–threonine 196 and glycine 203–glycine 284. The heme c site is built by cysteine 121, cysteine 124, histidine 125, methionine 173, cysteine 216, cysteine 219, histidine 220, and methionine 261.

This sequence belongs to the CcoP / FixP family. In terms of assembly, component of the cbb3-type cytochrome c oxidase at least composed of FixN, FixO, FixQ and FixP. Requires heme c as cofactor.

The protein resides in the cell inner membrane. It functions in the pathway energy metabolism; oxidative phosphorylation. C-type cytochrome. Part of the cbb3-type cytochrome c oxidase complex. FixP subunit is required for transferring electrons from donor cytochrome c via its heme groups to FixO subunit. From there, electrons are shuttled to the catalytic binuclear center of FixN subunit where oxygen reduction takes place. The complex also functions as a proton pump. The polypeptide is Cbb3-type cytochrome c oxidase subunit FixP (Rhizobium etli (strain ATCC 51251 / DSM 11541 / JCM 21823 / NBRC 15573 / CFN 42)).